Here is a 232-residue protein sequence, read N- to C-terminus: Enolase-phosphatase E1 (232 aa).

This sequence belongs to the HAD-like hydrolase superfamily. MasA/MtnC family. In terms of assembly, monomer. Mg(2+) serves as cofactor.

It catalyses the reaction 5-methylsulfanyl-2,3-dioxopentyl phosphate + H2O = 1,2-dihydroxy-5-(methylsulfanyl)pent-1-en-3-one + phosphate. It functions in the pathway amino-acid biosynthesis; L-methionine biosynthesis via salvage pathway; L-methionine from S-methyl-5-thio-alpha-D-ribose 1-phosphate: step 3/6. Its pathway is amino-acid biosynthesis; L-methionine biosynthesis via salvage pathway; L-methionine from S-methyl-5-thio-alpha-D-ribose 1-phosphate: step 4/6. Functionally, bifunctional enzyme that catalyzes the enolization of 2,3-diketo-5-methylthiopentyl-1-phosphate (DK-MTP-1-P) into the intermediate 2-hydroxy-3-keto-5-methylthiopentenyl-1-phosphate (HK-MTPenyl-1-P), which is then dephosphorylated to form the acireductone 1,2-dihydroxy-3-keto-5-methylthiopentene (DHK-MTPene). This Acidiphilium cryptum (strain JF-5) protein is Enolase-phosphatase E1.